The chain runs to 524 residues: Glycoprotein (524 aa).

An N-terminal signal peptide occupies residues 1–19; that stretch reads MVPQALLFVPLLVFPLCFG. Topologically, residues 20 to 459 are virion surface; that stretch reads KFPIYTILDK…DLGLPNWGKY (440 aa). 6 disulfides stabilise this stretch: C43–C302, C54–C226, C80–C113, C178–C188, C208–C247, and C242–C271. Residue N56 is glycosylated (N-linked (GlcNAc...) asparagine; by host). N-linked (GlcNAc...) asparagine; by host glycosylation is found at N266 and N338. A disulfide bond links C363 and C370. A helical membrane pass occupies residues 460–480; the sequence is VLLSAGALTALMLIIFLMTCC. C480 is lipidated: S-palmitoyl cysteine; by host. At 481–524 the chain is on the intravirion side; that stretch reads RRVNRSEPTQHNLRGTGREVSVTPQSGKIISSWESHKSGGETRL.

The protein belongs to the lyssavirus glycoprotein family. In terms of assembly, homotrimer. Interacts with matrix protein. Interacts with host TRFC. Interacts with host BST2; this interaction inhibits viral budding by tethering new virions to the cell surface. Interacts with ITGB1. Interacts with host GRM2. Glycosylated and palmitoylated by host. Glycosylation is crucial for glycoprotein export at the cell surface.

It is found in the virion membrane. In terms of biological role, attaches the virus to host cellular receptor, inducing endocytosis of the virion by using different host proteins including TFRC, GRM2 and ITGB1. In the endosome, the acidic pH induces conformational changes in the glycoprotein trimer, which trigger fusion between virus and cell membrane. There is convincing in vitro evidence that the muscular form of the nicotinic acetylcholine receptor (nAChR), the neuronal cell adhesion molecule (NCAM), and the p75 neurotrophin receptor (p75NTR) bind glycoprotein and thereby facilitate rabies virus entry into cells. This Rabies virus (strain ERA) (RABV) protein is Glycoprotein (G).